We begin with the raw amino-acid sequence, 852 residues long: Thrombospondin type-1 domain-containing protein 1 (852 aa).

Residues 1 to 24 (MKPMLKDFSNLLLVVLCDYVLGEA) form the signal peptide. Topologically, residues 25–413 (EYLLLREPGH…QPQGPVKSNN (389 aa)) are extracellular. Asparagine 39, asparagine 53, asparagine 58, asparagine 69, asparagine 80, asparagine 135, and asparagine 304 each carry an N-linked (GlcNAc...) asparagine glycan. The TSP type-1 domain occupies 340 to 393 (TETWGLWQPWSQCSATCGDGVRERRRVCLTSFPSSPVCPGMSLEASLCSLEECA). Cystine bridges form between cysteine 352-cysteine 387, cysteine 356-cysteine 392, and cysteine 367-cysteine 377. The chain crosses the membrane as a helical span at residues 414-434 (IVTVTGISLCLFIIIATVLIT). The Cytoplasmic portion of the chain corresponds to 435–852 (LWRRFGRPAK…STLSVEKLVI (418 aa)). Disordered regions lie at residues 444–517 (KCST…ESFQ) and 624–799 (LIRK…RKDK). Serine 463 carries the post-translational modification Phosphoserine. Basic residues predominate over residues 645-654 (ARNAHFRRTA). The segment covering 655-669 (SFHEARQARPFRERS) has biased composition (basic and acidic residues). A compositionally biased stretch (polar residues) spans 670–685 (MSTLTPRQAPAYSSRT). Positions 686–696 (RTCEQAEDRFR) are enriched in basic and acidic residues. Composition is skewed to polar residues over residues 766-778 (SHKS…SSPI) and 785-794 (QRVSSLSPSQ).

In terms of assembly, part of a complex composed of THSD1, PTK2/FAK1, TLN1 and VCL. Interacts with TLN1.

The protein localises to the endosome membrane. It localises to the cell junction. It is found in the focal adhesion. The protein resides in the membrane. Its subcellular location is the secreted. Is a positive regulator of nascent focal adhesion assembly, involved in the modulation of endothelial cell attachment to the extracellular matrix. The sequence is that of Thrombospondin type-1 domain-containing protein 1 (THSD1) from Homo sapiens (Human).